A 544-amino-acid chain; its full sequence is Chaperonin GroEL (544 aa).

ATP-binding positions include 30 to 33 (TLGP), lysine 51, 87 to 91 (DGTTT), glycine 415, 481 to 483 (DAL), and aspartate 497.

It belongs to the chaperonin (HSP60) family. Forms a cylinder of 14 subunits composed of two heptameric rings stacked back-to-back. Interacts with the co-chaperonin GroES.

The protein localises to the cytoplasm. It carries out the reaction ATP + H2O + a folded polypeptide = ADP + phosphate + an unfolded polypeptide.. Together with its co-chaperonin GroES, plays an essential role in assisting protein folding. The GroEL-GroES system forms a nano-cage that allows encapsulation of the non-native substrate proteins and provides a physical environment optimized to promote and accelerate protein folding. The protein is Chaperonin GroEL of Chlamydia felis (strain Fe/C-56) (Chlamydophila felis).